A 100-amino-acid chain; its full sequence is Small ribosomal subunit protein uS14c (100 aa).

Belongs to the universal ribosomal protein uS14 family. As to quaternary structure, part of the 30S ribosomal subunit.

It localises to the plastid. Its subcellular location is the chloroplast. In terms of biological role, binds 16S rRNA, required for the assembly of 30S particles. This Chara vulgaris (Common stonewort) protein is Small ribosomal subunit protein uS14c.